The primary structure comprises 739 residues: Prestin (739 aa).

Over 1–76 (MEHVTVSEEP…PILTWLPSYP (76 aa)) the chain is Cytoplasmic. The helical transmembrane segment at 77 to 106 (LKEYLFGDIVSGISTGVMQLPQGLAYAMLA) threads the bilayer. The Extracellular segment spans residues 107–109 (AVP). A helical transmembrane segment spans residues 110–127 (PVFGLYSSFYPVLLYTFF). Topologically, residues 128–138 (GTSKHISIGTF) are cytoplasmic. A helical membrane pass occupies residues 139-152 (AVISLMIGGVAVRE). Topologically, residues 153–169 (APDSMFMVNGTNSSLVV) are extracellular. N-linked (GlcNAc...) asparagine glycans are attached at residues Asn-161 and Asn-164. The helical transmembrane segment at 170–199 (NIEARDSRRVEVVVALTTLVGIIQFVLGLL) threads the bilayer. Residues 200–209 (RFGFLAIYLT) are Cytoplasmic-facing. Residues 210 to 233 (EPLVRGFTTAAAVHVSVSQLKYLL) traverse the membrane as a helical segment. At 234 to 244 (GVKTARFNGPL) the chain is on the extracellular side. Residues 245-256 (SVVYSLDAVLRN) constitute an intramembrane region (helical). Over 257–261 (IADTN) the chain is Extracellular. The chain crosses the membrane as a helical span at residues 262–285 (IVTLIIGLGCTVFLYIIKQLNERF). Residues 286-294 (KKKLLIPIP) lie on the Cytoplasmic side of the membrane. A helical transmembrane segment spans residues 295-310 (GEIIVVIVSTGISYGM). At 311–335 (LMSENYGVDVVGKIPTGLLPPKVPD) the chain is on the extracellular side. The helical transmembrane segment at 336–370 (FSVFPNLFADAVPIAVVGFSITISLAKTFALKYGY) threads the bilayer. Residues 371–373 (SVD) are Cytoplasmic-facing. The helical transmembrane segment at 374–391 (GNQELIALGLCNFVSSFF) threads the bilayer. At 392–399 (HTFVVTAS) the chain is on the extracellular side. Residues 400-409 (MSRSLVQEST) traverse the membrane as a helical segment. Residue Ser-401 coordinates salicylate. Residues 410–413 (GGHT) are Cytoplasmic-facing. Residues 414-435 (EIAGLLASLLVLLVVVAIGFVF) form a helical membrane-spanning segment. Over 436 to 439 (QPLP) the chain is Extracellular. The chain crosses the membrane as a helical span at residues 440-467 (TTVLAAIIMVNLLGMFKQTRDIPVLWRK). Position 468 (Ser-468) is a topological domain, cytoplasmic. The chain crosses the membrane as a helical span at residues 469 to 484 (KIELAIWLVSFFASVL). Topologically, residues 485 to 486 (LG) are extracellular. The helical transmembrane segment at 487-507 (LDYGLAVAMAFAILTVIYRTQ) threads the bilayer. The tract at residues 508–731 (RPKNVVLGQI…AVLQCKRWRD (224 aa)) is extended region for STAS domain. Residues 508-739 (RPKNVVLGQI…RDLPVHPNIH (232 aa)) are Cytoplasmic-facing. In terms of domain architecture, STAS spans 528–726 (EYEEAEECSG…PTIHDAVLQC (199 aa)).

Belongs to the SLC26A/SulP transporter (TC 2.A.53) family. As to quaternary structure, homodimer. Interacts (via STAS domain) with CALM; this interaction is calcium-dependent. In terms of tissue distribution, expressed in hair cells of the auditory organs.

It localises to the cell membrane. The catalysed reaction is oxalate(in) + chloride(out) = oxalate(out) + chloride(in). The enzyme catalyses sulfate(out) + chloride(in) = sulfate(in) + chloride(out). Sulfate/chloride antiport activity is inhibited by salicylate; this inhibition is reversible. In terms of biological role, electrogenic antiporter that exchanges sulfate or oxalate for chloride ion in a strictly coupled manner with a 1:1 stoichiometry. Adopts a dynamic conformation, which alternates between the exposure of the central binding site to the extra- and intracellular solutions leading to an inward-to-outward conformational transition during the transport cycle. Generates voltage-dependent charge movements resembling to the non-linear capacitance (NLC) of the cell membrane, but which are not associated to electromotile activity. The chain is Prestin from Danio rerio (Zebrafish).